Consider the following 154-residue polypeptide: Protein X (154 aa).

A mitochondrial targeting sequence region spans residues 68 to 117 (PCALRFTSARCMETTVNAPRNLPKVLHKRTLGLSAMSTTKIETYFKDCVF).

It belongs to the orthohepadnavirus protein X family. As to quaternary structure, may form homodimer. May interact with host CEBPA, CFLAR, CREB1, DDB1, E4F1, HBXIP, HSPD1/HSP60, NFKBIA, POLR2E and SMAD4. Interacts with host SMC5-SMC6 complex and induces its degradation. Interacts with host TRPC4AP; leading to prevent ubiquitination of TRPC4AP. Interacts with host PLSCR1; this interaction promotes ubiquitination and degradation of HBx and impairs HBx-mediated cell proliferation. Post-translationally, a fraction may be phosphorylated in insect cells and HepG2 cells, a human hepatoblastoma cell line. Phosphorylated in vitro by host protein kinase C or mitogen-activated protein kinase. N-acetylated in insect cells.

Its subcellular location is the host cytoplasm. The protein localises to the host nucleus. It is found in the host mitochondrion. Its function is as follows. Multifunctional protein that plays a role in silencing host antiviral defenses and promoting viral transcription. Does not seem to be essential for HBV infection. May be directly involved in development of cirrhosis and liver cancer (hepatocellular carcinoma). Most of cytosolic activities involve modulation of cytosolic calcium. The effect on apoptosis is controversial depending on the cell types in which the studies have been conducted. May induce apoptosis by localizing in mitochondria and causing loss of mitochondrial membrane potential. May also modulate apoptosis by binding host CFLAR, a key regulator of the death-inducing signaling complex (DISC). Promotes viral transcription by using the host E3 ubiquitin ligase DDB1 to target the SMC5-SMC6 complex to proteasomal degradation. This host complex would otherwise bind to viral episomal DNA, and prevents its transcription. Moderately stimulates transcription of many different viral and cellular transcription elements. Promoters and enhancers stimulated by HBx contain DNA binding sites for NF-kappa-B, AP-1, AP-2, c-EBP, ATF/CREB, or the calcium-activated factor NF-AT. This Chimpanzee hepatitis B virus (isolate United Kingdom/LSH/1988) (HBVcpz) protein is Protein X.